The following is a 394-amino-acid chain: Elongation factor Tu (394 aa).

The 196-residue stretch at 10-205 (KPHVNIGTIG…VDTWIPLPPR (196 aa)) folds into the tr-type G domain. The interval 19 to 26 (GHVDHGKT) is G1. GTP is bound at residue 19 to 26 (GHVDHGKT). Position 26 (Thr-26) interacts with Mg(2+). The G2 stretch occupies residues 60–64 (GITIN). The interval 81–84 (DCPG) is G3. GTP-binding positions include 81–85 (DCPGH) and 136–139 (NKCD). Positions 136-139 (NKCD) are G4. A G5 region spans residues 174-176 (SAL).

Belongs to the TRAFAC class translation factor GTPase superfamily. Classic translation factor GTPase family. EF-Tu/EF-1A subfamily. As to quaternary structure, monomer.

The protein resides in the cytoplasm. The catalysed reaction is GTP + H2O = GDP + phosphate + H(+). Functionally, GTP hydrolase that promotes the GTP-dependent binding of aminoacyl-tRNA to the A-site of ribosomes during protein biosynthesis. This Phocaeicola vulgatus (strain ATCC 8482 / DSM 1447 / JCM 5826 / CCUG 4940 / NBRC 14291 / NCTC 11154) (Bacteroides vulgatus) protein is Elongation factor Tu.